The primary structure comprises 380 residues: Homoserine O-succinyltransferase (380 aa).

One can recognise an AB hydrolase-1 domain in the interval 51-362; the sequence is NAVLICHALS…SKHGHDAFLL (312 aa). The active-site Nucleophile is Ser-157. Arg-227 provides a ligand contact to substrate. Active-site residues include Asp-324 and His-357. Asp-358 provides a ligand contact to substrate.

Belongs to the AB hydrolase superfamily. MetX family. Homodimer.

It localises to the cytoplasm. It carries out the reaction L-homoserine + succinyl-CoA = O-succinyl-L-homoserine + CoA. It functions in the pathway amino-acid biosynthesis; L-methionine biosynthesis via de novo pathway; O-succinyl-L-homoserine from L-homoserine: step 1/1. Transfers a succinyl group from succinyl-CoA to L-homoserine, forming succinyl-L-homoserine. This Cellvibrio japonicus (strain Ueda107) (Pseudomonas fluorescens subsp. cellulosa) protein is Homoserine O-succinyltransferase.